A 520-amino-acid chain; its full sequence is Diacylglycerol O-acyltransferase 1 (520 aa).

Disordered stretches follow at residues 28-57 (RRKS…GAPA) and 72-116 (QGTA…AHRR). Residues 34–54 (DSSNGLLLSGSDNNSPSDDVG) show a composition bias toward low complexity. The segment covering 81–98 (NNGGGDNNGGGRGGGEGR) has biased composition (gly residues). 7 helical membrane-spanning segments follow: residues 126–146 (AIFK…LIAV), 176–196 (WPLF…FTVE), 207–227 (PVVI…PVYV), 233–253 (SAFL…LKLV), 276–296 (VSYY…TLCY), 317–337 (KLVI…NPIV), and 365–385 (VWLC…AELL). Positions 392-398 (FYKDWWN) match the FYXDWWN motif motif. The next 3 helical transmembrane spans lie at 434 to 454 (LAII…IAVP), 457 to 477 (LFKL…FITN), and 487 to 507 (VGNM…CVLL). The active site involves His447.

Belongs to the membrane-bound acyltransferase family. Sterol o-acyltransferase subfamily. In terms of assembly, interacts with LPCAT2 and LPAT2. In terms of tissue distribution, ubiquitous. Highest expression in young developing seeds.

The protein resides in the plastid. The protein localises to the chloroplast membrane. It is found in the endoplasmic reticulum membrane. It catalyses the reaction an acyl-CoA + a 1,2-diacyl-sn-glycerol = a triacyl-sn-glycerol + CoA. The catalysed reaction is 1,2-di-(9Z-octadecenoyl)-sn-glycerol + (9Z)-octadecenoyl-CoA = 1,2,3-tri-(9Z-octadecenoyl)-glycerol + CoA. The protein operates within glycerolipid metabolism; triacylglycerol biosynthesis. Partially inhibited by niacin. In terms of biological role, major contributor to triacylglycerol (TAG) synthesis and oil accumulation in seeds. Catalyzes the acylation of the sn-3 hydroxy group of sn-1,2-diacylglycerol using acyl-CoA. Can use palmitoyl-CoA and oleoyl-CoA as substrates. Can use oleoyl-CoA and linoleoyl-CoA as substrates. Has substrate preference for oleoyl-CoA compared to linoleoyl-CoA. Has complementary functions with PDAT1 that are essential for triacylglycerol synthesis and normal development of both seeds and pollen. The sequence is that of Diacylglycerol O-acyltransferase 1 from Arabidopsis thaliana (Mouse-ear cress).